A 520-amino-acid polypeptide reads, in one-letter code: Cytochrome P450 315a1, mitochondrial (520 aa).

Cys-466 is a heme binding site.

This sequence belongs to the cytochrome P450 family. The cofactor is heme. Complex coexpression pattern of dib (disembodied) and sad (shade) in the early embryo that restricts to the prothoracic gland cells of the developing ring gland during late embryogenesis. In larvae and adult, coexpression is seen in prothoracic gland and follicle cells of the ovary. In adults, coexpression is seen in the follicle cells, sad only is expressed in nurse cells.

The protein resides in the mitochondrion membrane. It catalyses the reaction 2-deoxyecdysone + 2 reduced [adrenodoxin] + O2 + 2 H(+) = ecdysone + 2 oxidized [adrenodoxin] + H2O. It carries out the reaction 2,22-dideoxyecdysone + 2 reduced [adrenodoxin] + O2 + 2 H(+) = 22-deoxyecdysone + 2 oxidized [adrenodoxin] + H2O. Its pathway is steroid biosynthesis; ecdysteroid biosynthesis. Its function is as follows. Required for CNS development: midline glial cells. Involved in the metabolism of insect hormones: responsible for ecdysteroid C2-hydroxylase activity. May be involved in the breakdown of synthetic insecticides. The protein is Cytochrome P450 315a1, mitochondrial of Drosophila melanogaster (Fruit fly).